A 370-amino-acid polypeptide reads, in one-letter code: Cyclic dehypoxanthine futalosine synthase (370 aa).

A Radical SAM core domain is found at 50-295; sequence TTFVIGRNVN…QSSWVTMGPE (246 aa). 3 residues coordinate [4Fe-4S] cluster: C64, C68, and C71.

It belongs to the radical SAM superfamily. MqnC family. The cofactor is [4Fe-4S] cluster.

It catalyses the reaction dehypoxanthine futalosine + S-adenosyl-L-methionine = cyclic dehypoxanthinylfutalosinate + 5'-deoxyadenosine + L-methionine + H(+). It participates in quinol/quinone metabolism; menaquinone biosynthesis. In terms of biological role, radical SAM enzyme that catalyzes the cyclization of dehypoxanthine futalosine (DHFL) into cyclic dehypoxanthine futalosine (CDHFL), a step in the biosynthesis of menaquinone (MK, vitamin K2). This is Cyclic dehypoxanthine futalosine synthase from Halalkalibacterium halodurans (strain ATCC BAA-125 / DSM 18197 / FERM 7344 / JCM 9153 / C-125) (Bacillus halodurans).